The following is a 389-amino-acid chain: MGYIGAHGVAALHRYKYSGVDHSYLAKYVLQPFWTRFVKVFPLWMPPNMITLMGFMFLVTSSLLGYIYSPQLDSPPPRWVHFAHGLLLFLYQTFDAVDGKQARRTNSSSPLGELFDHGCDALACAFEAMAFGSTAMCGRDTFWFWVISAIPFYGATWEHYFTNTLILPVINGPTEGLALIFVSHFFTAIVGAEWWAQQLGQSIPLFSWVPFVNEIQTSRAVLYMMIAFAVIPTVAFNVTNVYKVVRSRNGSMVLALAMLYPFVVLLGGVLIWDYLSPINLIATYPHLVVLGTGLAFGFLVGRMILAHLCDEPKGLKTNMCMSLLYLPFALANALTARLNAGVPLVDELWVLLGYCIFTVSLYLHFATSVIHEITEALGIYCFRITRKEA.

Residues 40-60 (VFPLWMPPNMITLMGFMFLVT) traverse the membrane as a helical segment. Asn48 serves as a coordination point for CDP-choline. Mg(2+) is bound by residues Asp95 and Asp98. Arg103 serves as a coordination point for CDP-choline. Asp116 contributes to the Mg(2+) binding site. The active-site Proton acceptor is the His117. Position 120 (Asp120) interacts with Mg(2+). 7 consecutive transmembrane segments (helical) span residues 141–161 (TFWF…EHYF), 176–196 (GLAL…EWWA), 221–241 (VLYM…VTNV), 252–272 (MVLA…VLIW), 280–300 (LIAT…GFLV), 322–344 (SLLY…GVPL), and 350–370 (VLLG…TSVI).

The protein belongs to the CDP-alcohol phosphatidyltransferase class-I family. Mg(2+) serves as cofactor. Mn(2+) is required as a cofactor.

The protein localises to the membrane. The enzyme catalyses CDP-ethanolamine + a 1,2-diacyl-sn-glycerol = a 1,2-diacyl-sn-glycero-3-phosphoethanolamine + CMP + H(+). It carries out the reaction CDP-choline + a 1,2-diacyl-sn-glycerol = a 1,2-diacyl-sn-glycero-3-phosphocholine + CMP + H(+). Its pathway is phospholipid metabolism; phosphatidylethanolamine biosynthesis; phosphatidylethanolamine from ethanolamine: step 3/3. It functions in the pathway phospholipid metabolism; phosphatidylcholine biosynthesis; phosphatidylcholine from phosphocholine: step 2/2. Functionally, catalyzes both phosphatidylcholine and phosphatidylethanolamine biosynthesis from CDP-choline and CDP-ethanolamine, respectively. Has a higher cholinephosphotransferase activity than ethanolaminephosphotransferase activity. The sequence is that of Choline/ethanolaminephosphotransferase 1 (AAPT1) from Arabidopsis thaliana (Mouse-ear cress).